The primary structure comprises 249 residues: Probable DNA polymerase sliding clamp (249 aa).

A DNA-binding region spans residues 60 to 79 (ACERKLSFSVPVRGLVKIVR).

Belongs to the PCNA family.

Its function is as follows. Sliding clamp subunit. Responsible for tethering the catalytic subunit of DNA polymerase to DNA during high-speed replication. The polypeptide is Probable DNA polymerase sliding clamp (PCNA) (Orgyia pseudotsugata multicapsid polyhedrosis virus (OpMNPV)).